Reading from the N-terminus, the 468-residue chain is Glutamate--tRNA ligase (468 aa).

The short motif at 9–19 (PSPTGYLHVGG) is the 'HIGH' region element. Zn(2+) is bound by residues cysteine 98, cysteine 100, cysteine 125, and aspartate 127. A 'KMSKS' region motif is present at residues 235-239 (KLSKR). Lysine 238 is a binding site for ATP.

Belongs to the class-I aminoacyl-tRNA synthetase family. Glutamate--tRNA ligase type 1 subfamily. In terms of assembly, monomer. The cofactor is Zn(2+).

The protein resides in the cytoplasm. The enzyme catalyses tRNA(Glu) + L-glutamate + ATP = L-glutamyl-tRNA(Glu) + AMP + diphosphate. Functionally, catalyzes the attachment of glutamate to tRNA(Glu) in a two-step reaction: glutamate is first activated by ATP to form Glu-AMP and then transferred to the acceptor end of tRNA(Glu). The chain is Glutamate--tRNA ligase from Idiomarina loihiensis (strain ATCC BAA-735 / DSM 15497 / L2-TR).